We begin with the raw amino-acid sequence, 89 residues long: U-scoloptoxin(12)-Er1a (89 aa).

The first 22 residues, 1–22 (MKGLFLVVFLMWFVSQMNTEET), serve as a signal peptide directing secretion.

It belongs to the scoloptoxin-12 family. Contains 3 disulfide bonds. As to expression, expressed by the venom gland.

It localises to the secreted. This Ethmostigmus rubripes (Giant centipede) protein is U-scoloptoxin(12)-Er1a.